Reading from the N-terminus, the 160-residue chain is MEIPVPVQPSWLRRASAPLPGLSAPGRLFDQRFGEGLLEAELAALCPTTLAPYYLRAPSVALPVAQVPTDPGHFSVLLDVKHFSPEEIAVKVVGEHVEVHARHEERPDEHGFVAREFHRRYRLPPGVDPAAVTSALSPEGVLSIQAAPASAQAPPPAAAK.

Positions 1–72 (MEIPVPVQPS…PVAQVPTDPG (72 aa)) are involved in stabilization of the HSPB1:HSBP6 heterodimer. At Ser-16 the chain carries Phosphoserine; by PKA. In terms of domain architecture, sHSP spans 55–160 (LRAPSVALPV…AQAPPPAAAK (106 aa)). A Deamidated glutamine modification is found at Gln-66.

Belongs to the small heat shock protein (HSP20) family. In terms of assembly, homodimer. Small heat shock proteins form high molecular mass oligomers containing variable number of monomers; these oligomers display a very flexible quaternary structure easily exchanging their subunits. Heterooligomer with HSPB1; formed through oligomerization of HSPB1:HSBP6 dimers; subunit exchange leads to formation of at least two different heterooligomeric complexes, differing in variable quantities of HSPB1 and HSPB6 homodimers in addition to HSPB1:HSPB6 heterodimers. Heterooligomer with CRYAB; large heterooligomers consist of CRYAB homodimers and HSPB5:HSPB6 heterodimers but lacking HSPB6 homodimers. Interacts with BAG3. Interacts (phosphorylated) with YWHAZ. Interacts with PDE4A and PDE4D; required for maintenance of the non-phosphorylated state of HSPB6 under basal conditions. Interacts with KDR. Interacts with PRKD1. In terms of processing, the N-terminus is blocked. Phosphorylated at Ser-16 by PKA and probably PKD1K; required to protect cardiomyocytes from apoptosis.

Its subcellular location is the cytoplasm. The protein resides in the nucleus. It localises to the secreted. Functionally, small heat shock protein which functions as a molecular chaperone probably maintaining denatured proteins in a folding-competent state. Seems to have versatile functions in various biological processes. Plays a role in regulating muscle function such as smooth muscle vasorelaxation and cardiac myocyte contractility. May regulate myocardial angiogenesis implicating KDR. Overexpression mediates cardioprotection and angiogenesis after induced damage. Stabilizes monomeric YWHAZ thereby supporting YWHAZ chaperone-like activity. The sequence is that of Heat shock protein beta-6 (HSPB6) from Homo sapiens (Human).